A 112-amino-acid polypeptide reads, in one-letter code: ATP-dependent Clp protease adapter protein ClpS (112 aa).

The protein belongs to the ClpS family. In terms of assembly, binds to the N-terminal domain of the chaperone ClpA.

In terms of biological role, involved in the modulation of the specificity of the ClpAP-mediated ATP-dependent protein degradation. This is ATP-dependent Clp protease adapter protein ClpS from Rhodococcus opacus (strain B4).